Consider the following 570-residue polypeptide: Adenine deaminase (570 aa).

The protein belongs to the metallo-dependent hydrolases superfamily. Adenine deaminase family. Mn(2+) is required as a cofactor.

It catalyses the reaction adenine + H2O + H(+) = hypoxanthine + NH4(+). The protein is Adenine deaminase of Clostridium acetobutylicum (strain ATCC 824 / DSM 792 / JCM 1419 / IAM 19013 / LMG 5710 / NBRC 13948 / NRRL B-527 / VKM B-1787 / 2291 / W).